The following is a 199-amino-acid chain: MSRYTGPLFKKSRRFGYSILETNKEFSKGRKRTYAPGQHGNKRVKLSDYGLHLYEKQKVKLVFGVSEKQLLKTYKKAVKSKEITGTVLLQLLESRLDNLVYRAGFATTRRQARQLVNHGHFTIDGKKANIPSMQIKTGTTVVLKETSRKLKLVQEALEMQPASAWVTRKDFQFTFYRVPERTEMHKDIKEALVVEFYAK.

In terms of domain architecture, S4 RNA-binding spans serine 94–leucine 157.

The protein belongs to the universal ribosomal protein uS4 family. As to quaternary structure, part of the 30S ribosomal subunit. Contacts protein S5. The interaction surface between S4 and S5 is involved in control of translational fidelity.

Functionally, one of the primary rRNA binding proteins, it binds directly to 16S rRNA where it nucleates assembly of the body of the 30S subunit. Its function is as follows. With S5 and S12 plays an important role in translational accuracy. In Mycoplasmopsis synoviae (strain 53) (Mycoplasma synoviae), this protein is Small ribosomal subunit protein uS4.